We begin with the raw amino-acid sequence, 249 residues long: Glycoprotein 2a (249 aa).

Positions 1–35 are cleaved as a signal peptide; the sequence is MQWGHCGVKSASCSWTPSLSSLLVWLILPFSLPYC. At 36 to 207 the chain is on the virion surface side; that stretch reads LGSPSQDGYW…LTDFRQWLIS (172 aa). N-linked (GlcNAc...) asparagine; by host glycosylation is found at asparagine 173 and asparagine 179. Residues 208 to 228 traverse the membrane as a helical segment; it reads VHASIFSSVASSVTLFIVLWL. The Intravirion portion of the chain corresponds to 229–249; it reads RIPALRYVFGFHWPTATHHSS.

As to quaternary structure, heterotrimer of GP2a, GP3, and GP4. The GP2a-GP3-GP4 complex associates with the E protein. Interacts with host CD163; this interaction plays a role in virus entry into host cell.

The protein resides in the virion membrane. It localises to the host endoplasmic reticulum membrane. The protein localises to the host Golgi apparatus membrane. It is found in the secreted. In terms of biological role, minor envelope protein. Along with GP4, serves as the viral attachment protein responsible for mediating interactions with CD163 thereby playing a role in virus entry into susceptible host cells. This Porcine reproductive and respiratory syndrome virus (strain Lelystad) (PRRSV) protein is Glycoprotein 2a (GP2a).